The primary structure comprises 328 residues: NADH-cytochrome b5 reductase-like protein (328 aa).

An FAD-binding FR-type domain is found at 76 to 184 (DKWLEFKLQD…KGPVEKFKYS (109 aa)). Threonine 201 carries the phosphothreonine modification.

It belongs to the flavoprotein pyridine nucleotide cytochrome reductase family. The cofactor is FAD.

The protein resides in the mitochondrion. The catalysed reaction is 2 Fe(III)-[cytochrome b5] + NADH = 2 Fe(II)-[cytochrome b5] + NAD(+) + H(+). Functionally, desaturation and elongation of fatty acids. The protein is NADH-cytochrome b5 reductase-like protein (CBR2) of Arabidopsis thaliana (Mouse-ear cress).